Reading from the N-terminus, the 220-residue chain is 1-Cys peroxiredoxin B (220 aa).

A Thioredoxin domain is found at 4 to 165 (LTLGDVVPDL…VLRATDALLT (162 aa)). Catalysis depends on Cys46, which acts as the Cysteine sulfenic acid (-SOH) intermediate. The short motif at 195–218 (KARFPAGFETAQLPSNKCYLRFTQ) is the Bipartite nuclear localization signal element.

It belongs to the peroxiredoxin family. Prx6 subfamily.

Its subcellular location is the nucleus. The protein resides in the cytoplasm. It carries out the reaction a hydroperoxide + [thioredoxin]-dithiol = an alcohol + [thioredoxin]-disulfide + H2O. Thiol-specific peroxidase that catalyzes the reduction of hydrogen peroxide and organic hydroperoxides to water and alcohols, respectively. Seems to contribute to the inhibition of germination during stress. The polypeptide is 1-Cys peroxiredoxin B (Oryza sativa subsp. japonica (Rice)).